Consider the following 418-residue polypeptide: Vasopressin V1a receptor (418 aa).

Positions 1 to 43 are disordered; sequence MRLSAGPDAGPSGNSSPWWPLATGAGNTSREAEALGEGNGPPR. Residues 1–52 are Extracellular-facing; the sequence is MRLSAGPDAGPSGNSSPWWPLATGAGNTSREAEALGEGNGPPRDVRNEELAK. N-linked (GlcNAc...) asparagine glycosylation occurs at N27. Residues 53-76 traverse the membrane as a helical segment; it reads LEIAVLAVTFAVAVLGNSSVLLAL. Residues 77–88 are Cytoplasmic-facing; sequence HRTPRKTSRMHL. The helical transmembrane segment at 89–110 threads the bilayer; sequence FIRHLSLADLAVAFFQVLPQMC. Over 111–125 the chain is Extracellular; sequence WDITYRFRGPDWLCR. The cysteines at positions 124 and 203 are disulfide-linked. The chain crosses the membrane as a helical span at residues 126-147; it reads VVKHLQVFGMFASAYMLVVMTA. Residues 148–168 are Cytoplasmic-facing; it reads DRYIAVCHPLKTLQQPARRSR. A helical membrane pass occupies residues 169 to 190; sequence LMIAAAWVLSFVLSTPQYFVFS. Over 191-218 the chain is Extracellular; that stretch reads MIEVNNVTKARDCWATFIQPWGSRAYVT. N196 carries N-linked (GlcNAc...) asparagine glycosylation. A helical membrane pass occupies residues 219 to 239; that stretch reads WMTGGIFVAPVVILGTCYGFI. Topologically, residues 240 to 293 are cytoplasmic; the sequence is CYNIWCNVRGKTASRQSKGAEQAGVAFQKGFLLAPCVSSVKSISRAKIRTVKMT. Residues 294-313 traverse the membrane as a helical segment; that stretch reads FVIVTAYIVCWAPFFIIQMW. The Extracellular segment spans residues 314–331; it reads SVWDPMSVWTESENPTIT. The helical transmembrane segment at 332–351 threads the bilayer; sequence ITALLGSLNSCCNPWIYMFF. Residues 352–418 lie on the Cytoplasmic side of the membrane; the sequence is SGHLLQDCVQ…KSIKFIPVST (67 aa). S-palmitoyl cysteine attachment occurs at residues C365 and C366. Positions 377 to 410 are disordered; the sequence is DTDSMSRRQTFYSNNRSPTNSTGMWKDSPKSSKS. Polar residues predominate over residues 383–399; it reads RRQTFYSNNRSPTNSTG. Phosphoserine is present on S404.

This sequence belongs to the G-protein coupled receptor 1 family. Vasopressin/oxytocin receptor subfamily.

It is found in the cell membrane. Its function is as follows. Receptor for arginine vasopressin. The activity of this receptor is mediated by G proteins which activate a phosphatidyl-inositol-calcium second messenger system. Has been involved in social behaviors, including affiliation and attachment. This Homo sapiens (Human) protein is Vasopressin V1a receptor (AVPR1A).